Here is a 319-residue protein sequence, read N- to C-terminus: L-lactate dehydrogenase (319 aa).

NAD(+) is bound by residues 10–11 (RV), D32, R37, Y62, and 76–77 (GV). Substrate contacts are provided by residues Q79, R85, and 117-120 (NPVD). Residues 115–117 (VTN) and S140 each bind NAD(+). 145–148 (DTAR) is a substrate binding site. Beta-D-fructose 1,6-bisphosphate is bound by residues R150 and H165. H172 acts as the Proton acceptor in catalysis. Y217 carries the phosphotyrosine modification. A substrate-binding site is contributed by T226.

This sequence belongs to the LDH/MDH superfamily. LDH family. Homotetramer.

It is found in the cytoplasm. The enzyme catalyses (S)-lactate + NAD(+) = pyruvate + NADH + H(+). It participates in fermentation; pyruvate fermentation to lactate; (S)-lactate from pyruvate: step 1/1. Allosterically activated by fructose 1,6-bisphosphate (FBP). Inactivated by Mn(2+), Co(2+), Cd(2+) and Zn(2+). In terms of biological role, catalyzes the conversion of lactate to pyruvate. It is stereospecific for L(+)-lactate. The protein is L-lactate dehydrogenase of Thermotoga maritima (strain ATCC 43589 / DSM 3109 / JCM 10099 / NBRC 100826 / MSB8).